The following is a 337-amino-acid chain: DNA-directed RNA polymerase subunit alpha (337 aa).

Residues 1-233 (MIQKNWQELI…DQLSLFVNFE (233 aa)) are alpha N-terminal domain (alpha-NTD). Positions 249-337 (FNPALLKKVD…DLAKRYEDQY (89 aa)) are alpha C-terminal domain (alpha-CTD).

This sequence belongs to the RNA polymerase alpha chain family. In terms of assembly, homodimer. The RNAP catalytic core consists of 2 alpha, 1 beta, 1 beta' and 1 omega subunit. When a sigma factor is associated with the core the holoenzyme is formed, which can initiate transcription.

It catalyses the reaction RNA(n) + a ribonucleoside 5'-triphosphate = RNA(n+1) + diphosphate. Functionally, DNA-dependent RNA polymerase catalyzes the transcription of DNA into RNA using the four ribonucleoside triphosphates as substrates. The sequence is that of DNA-directed RNA polymerase subunit alpha from Bartonella quintana (strain Toulouse) (Rochalimaea quintana).